The primary structure comprises 637 residues: Threonine--tRNA ligase (637 aa).

The TGS domain occupies 1 to 61 (MLNITLPDCS…VEDSAVQIIT (61 aa)). The catalytic stretch occupies residues 242-533 (DHRKLGKQLD…LIENHAGSFP (292 aa)). Zn(2+) is bound by residues Cys333, His384, and His510.

Belongs to the class-II aminoacyl-tRNA synthetase family. In terms of assembly, homodimer. Zn(2+) is required as a cofactor.

It is found in the cytoplasm. It catalyses the reaction tRNA(Thr) + L-threonine + ATP = L-threonyl-tRNA(Thr) + AMP + diphosphate + H(+). Catalyzes the attachment of threonine to tRNA(Thr) in a two-step reaction: L-threonine is first activated by ATP to form Thr-AMP and then transferred to the acceptor end of tRNA(Thr). Also edits incorrectly charged L-seryl-tRNA(Thr). The chain is Threonine--tRNA ligase from Neisseria gonorrhoeae (strain ATCC 700825 / FA 1090).